Reading from the N-terminus, the 676-residue chain is DNA ligase (676 aa).

NAD(+)-binding positions include 35 to 39, 84 to 85, and E118; these read DAEYD and SL. Residue K120 is the N6-AMP-lysine intermediate of the active site. NAD(+) is bound by residues R141, E176, K284, and K308. 4 residues coordinate Zn(2+): C402, C405, C420, and C426. In terms of domain architecture, BRCT spans 595-676; sequence SYLSLIHGKI…WLQYTQSSEN (82 aa).

The protein belongs to the NAD-dependent DNA ligase family. LigA subfamily. Requires Mg(2+) as cofactor. Mn(2+) serves as cofactor.

It carries out the reaction NAD(+) + (deoxyribonucleotide)n-3'-hydroxyl + 5'-phospho-(deoxyribonucleotide)m = (deoxyribonucleotide)n+m + AMP + beta-nicotinamide D-nucleotide.. Its function is as follows. DNA ligase that catalyzes the formation of phosphodiester linkages between 5'-phosphoryl and 3'-hydroxyl groups in double-stranded DNA using NAD as a coenzyme and as the energy source for the reaction. It is essential for DNA replication and repair of damaged DNA. The sequence is that of DNA ligase from Ehrlichia chaffeensis (strain ATCC CRL-10679 / Arkansas).